Consider the following 532-residue polypeptide: FAD-dependent monooxygenase hkm7 (532 aa).

Residues 191–193 (RIY) and Asp261 contribute to the FAD site.

The protein belongs to the PheA/TfdB FAD monooxygenase family.

It functions in the pathway secondary metabolite biosynthesis. In terms of biological role, FAD-dependent monooxygenase; part of the gene cluster that mediates the biosynthesis of hancockiamides, an unusual new family of N-cinnamoylated piperazines. The NRPS hkm10 and the NmrA-like reductase hkm9 are proposed to convert two molecules of L-Phe to the intermediary piperazine called xenocockiamide A. Xenocockiamide A is then converted to hancockiamide D via a series of hydroxylations and O-methylations. The tyrosinase hkm6 may catalyze an aromatic hydroxylation, then the 2-oxoglutarate-dependent Fe(II) dioxygenase hkm4 and the FAD-dependent phenol hydroxylase hkm7 may catalyze consecutive hydroxylations to install 2 more hydroxy groups, and the methyltransferase hkm8 probably catalyzes two methylations using 2 molecules of S-adenosyl-L-methionine (SAM). The NRPS hkm11 activates and transfers trans-cinnamate supplied by the PAL hkm12 to hancockiamide D and produces hancockiamide A. NRPS Hkm11 has the flexibility to tolerate the bulky hancockiamide G as a substrate and the absence of the acetyl-transferase hkm3 opens up the opportunity for hkm11 to introduce a second N-cinnamoyl moiety. The cytochrome P450 monooxygenase hkm5 catalyzes the methylenedioxy bridge formation, converting hancockiamide A into hancockiamide G. Hkm5 can also convert hancockiamide B into hancockiamide C, and hancockiamide D into hancockiamide H. The N-acetyltransferase hkm3 finally transfers an acetyl group to 1-N of piperazine, converting hancockiamide A into hancockiamide B and hancockiamide G into hancockiamide C. The polypeptide is FAD-dependent monooxygenase hkm7 (Aspergillus hancockii).